A 119-amino-acid chain; its full sequence is Large ribosomal subunit protein bL20 (119 aa).

Belongs to the bacterial ribosomal protein bL20 family.

Functionally, binds directly to 23S ribosomal RNA and is necessary for the in vitro assembly process of the 50S ribosomal subunit. It is not involved in the protein synthesizing functions of that subunit. This is Large ribosomal subunit protein bL20 from Shewanella amazonensis (strain ATCC BAA-1098 / SB2B).